The sequence spans 975 residues: Glycine dehydrogenase (decarboxylating) (975 aa).

K723 is modified (N6-(pyridoxal phosphate)lysine).

This sequence belongs to the GcvP family. As to quaternary structure, the glycine cleavage system is composed of four proteins: P, T, L and H. It depends on pyridoxal 5'-phosphate as a cofactor.

It carries out the reaction N(6)-[(R)-lipoyl]-L-lysyl-[glycine-cleavage complex H protein] + glycine + H(+) = N(6)-[(R)-S(8)-aminomethyldihydrolipoyl]-L-lysyl-[glycine-cleavage complex H protein] + CO2. In terms of biological role, the glycine cleavage system catalyzes the degradation of glycine. The P protein binds the alpha-amino group of glycine through its pyridoxal phosphate cofactor; CO(2) is released and the remaining methylamine moiety is then transferred to the lipoamide cofactor of the H protein. The sequence is that of Glycine dehydrogenase (decarboxylating) from Burkholderia cenocepacia (strain HI2424).